The sequence spans 1480 residues: Cystic fibrosis transmembrane conductance regulator (1480 aa).

Residues 1–77 (MQRSPLEKAS…KLINALRRCF (77 aa)) lie on the Cytoplasmic side of the membrane. The helical transmembrane segment at 78–98 (FWRFMFYGILLYLGEVTKAVQ) threads the bilayer. The region spanning 81 to 365 (FMFYGILLYL…WAVQTWYDSL (285 aa)) is the ABC transmembrane type-1 1 domain. The Extracellular portion of the chain corresponds to 99-122 (PLLLGRIIASYDPDNKTERSIAIY). Residues 123 to 146 (LGIGLCLLFIVRTLLLHPAIFGLH) traverse the membrane as a helical segment. The Cytoplasmic portion of the chain corresponds to 147 to 195 (HIGMQMRIAMFSLIYKKTLKLSSRVLDKISIGQLVSLLSNNLNKFDEGL). A helical transmembrane segment spans residues 196–216 (ALAHFVWIAPLQVALLMGLIW). The Extracellular segment spans residues 217–222 (ELLQAS). Residues 223-243 (VFCGLGFLIVLALFQAGLGRM) form a helical membrane-spanning segment. Topologically, residues 244–298 (MMKYRDQRAGKINERLVITSEMIENIQSVKAYCWEEAMEKMIENLRQTELKLTRK) are cytoplasmic. Residues 299–319 (AAYVRYFNSSAFFFSGFFVVF) traverse the membrane as a helical segment. At 320–339 (LSVLPYALIKGIILRKIFTT) the chain is on the extracellular side. Residues 340 to 358 (ISFCIVLRMAVTRQFPWAV) form a helical membrane-spanning segment. Residues 359 to 858 (QTWYDSLGAI…YLRYITLHKS (500 aa)) lie on the Cytoplasmic side of the membrane. ATP-binding positions include W401, S434, 458–465 (GSTGAGKT), and Q493. An ABC transporter 1 domain is found at 423–646 (NGHDNLFFSN…RPDFSSKLMG (224 aa)). C524 carries the S-palmitoyl cysteine lipid modification. A phosphoserine mark is found at S549 and S660. The segment at 654–831 (SSERRNSILT…EEINEEDLKE (178 aa)) is disordered R region. Phosphoserine; by PKA is present on S670. S686 bears the Phosphoserine mark. A Glycyl lysine isopeptide (Lys-Gly) (interchain with G-Cter in ubiquitin) cross-link involves residue K688. Residues S700 and S712 each carry the phosphoserine modification. The residue at position 717 (T717) is a Phosphothreonine. Phosphoserine is present on residues S737, S753, S768, S790, S795, and S813. The chain crosses the membrane as a helical span at residues 859–879 (LIFVLIWCLVIFLAEVAASLV). The region spanning 859–1155 (LIFVLIWCLV…AVNSSIDVDS (297 aa)) is the ABC transmembrane type-1 2 domain. Residues 880–918 (VLWLLGNTSFQDKGNSTYSRNNSYAVIITNTSSYYVFYI) lie on the Extracellular side of the membrane. N-linked (GlcNAc...) asparagine glycosylation is found at N894, N900, and N909. A discontinuously helical membrane pass occupies residues 919-939 (YVGVADTLLALGFFRGLPLVH). The Cytoplasmic portion of the chain corresponds to 940–990 (TLITVSKILHHKMLHSVLQAPMSTLNTLKAGGILNRFSKDIAILDDLLPLT). The helical transmembrane segment at 991-1011 (IFDFIQLLLIVIGAIAVVSVL) threads the bilayer. Over 1012–1013 (QP) the chain is Extracellular. A helical membrane pass occupies residues 1014–1034 (YIFLATVPVIAAFILLRAYFL). Residues 1035 to 1095 (QTSQQLKQLE…TANWFLYLST (61 aa)) lie on the Cytoplasmic side of the membrane. A helical transmembrane segment spans residues 1096 to 1116 (LRWFQMRIEMIFVIFFIAVTF). The Extracellular portion of the chain corresponds to 1117-1130 (ISILTTGEGEGTVG). Residues 1131-1151 (IILTLAMNIMSTLQWAVNSSI) traverse the membrane as a helical segment. The Cytoplasmic portion of the chain corresponds to 1152 to 1480 (DVDSLMRSVS…TEEEVQETRL (329 aa)). In terms of domain architecture, ABC transporter 2 spans 1210–1443 (MTIKDLTAKY…KSLFQQAISH (234 aa)). Residues Y1219 and 1244-1251 (GRTGSGKS) each bind ATP. Positions 1386–1480 (RALKQAFADC…TEEEVQETRL (95 aa)) are interaction with GORASP2. A lipid anchor (S-palmitoyl cysteine) is attached at C1395. Phosphoserine occurs at positions 1444 and 1456. Residues 1452-1480 (HRNSSKYKSRPQIASLKEETEEEVQETRL) are disordered. Residues 1470–1480 (ETEEEVQETRL) show a composition bias toward acidic residues. The PDZ-binding motif lies at 1478-1480 (TRL).

Belongs to the ABC transporter superfamily. ABCC family. CFTR transporter (TC 3.A.1.202) subfamily. As to quaternary structure, monomer; does not require oligomerization for channel activity. May form oligomers in the membrane. Interacts with SLC26A3, SLC26A6 and NHERF1. Interacts with SHANK2. Interacts with MYO6. Interacts (via C-terminus) with GOPC (via PDZ domain); this promotes CFTR internalization and thereby decreases channel activity. Interacts with SLC4A7 through NHERF1. Found in a complex with MYO5B and RAB11A. Interacts with ANO1. Interacts with SLC26A8. Interacts with AHCYL1; the interaction increases CFTR activity. Interacts with CSE1L. The core-glycosylated form interacts with GORASP2 (via PDZ GRASP-type 1 domain) in respone to ER stress. Interacts with MARCHF2; the interaction leads to CFTR ubiqtuitination and degradation. Interacts with ADGRG2. N-glycosylated. In terms of processing, phosphorylated; cAMP treatment promotes phosphorylation and activates the channel. Dephosphorylation decreases the ATPase activity (in vitro). Phosphorylation at PKA sites activates the channel. Phosphorylation at PKC sites enhances the response to phosphorylation by PKA. Phosphorylated by AMPK; this inhibits channel activity. Post-translationally, ubiquitinated, leading to its degradation in the lysosome. Deubiquitination by USP10 in early endosomes enhances its endocytic recycling to the cell membrane. Ubiquitinated by RNF185 during ER stress. Ubiquitinated by MARCHF2.

Its subcellular location is the apical cell membrane. The protein localises to the early endosome membrane. It is found in the cell membrane. The protein resides in the recycling endosome membrane. It localises to the endoplasmic reticulum membrane. Its subcellular location is the nucleus. The catalysed reaction is ATP + H2O + closed Cl(-) channel = ADP + phosphate + open Cl(-) channel.. The enzyme catalyses chloride(in) = chloride(out). It carries out the reaction hydrogencarbonate(in) = hydrogencarbonate(out). It catalyses the reaction ATP + H2O = ADP + phosphate + H(+). Functionally, epithelial ion channel that plays an important role in the regulation of epithelial ion and water transport and fluid homeostasis. Mediates the transport of chloride ions across the cell membrane. Possesses an intrinsic ATPase activity and utilizes ATP to gate its channel; the passive flow of anions through the channel is gated by cycles of ATP binding and hydrolysis by the ATP-binding domains. The ion channel is also permeable to HCO(3)(-); selectivity depends on the extracellular chloride concentration. Exerts its function also by modulating the activity of other ion channels and transporters. Contributes to the regulation of the pH and the ion content of the epithelial fluid layer. Modulates the activity of the epithelial sodium channel (ENaC) complex, in part by regulating the cell surface expression of the ENaC complex. May regulate bicarbonate secretion and salvage in epithelial cells by regulating the transporter SLC4A7. Can inhibit the chloride channel activity of ANO1. Plays a role in the chloride and bicarbonate homeostasis during sperm epididymal maturation and capacitation. This chain is Cystic fibrosis transmembrane conductance regulator, found in Plecturocebus moloch (Dusky titi monkey).